Here is a 768-residue protein sequence, read N- to C-terminus: Cullin-3-B (768 aa).

The interval 677–698 is disordered; sequence VAAKQGESDPERKETRQKVDDD. Basic and acidic residues predominate over residues 682–698; it reads GESDPERKETRQKVDDD. One can recognise a Cullin neddylation domain in the interval 698–760; sequence DRKHEIEAAI…REYLARTPED (63 aa). Residue Lys712 forms a Glycyl lysine isopeptide (Lys-Gly) (interchain with G-Cter in NEDD8) linkage.

This sequence belongs to the cullin family. Component of multiple BCR (BTB-CUL3-RBX1) E3 ubiquitin-protein ligase complexes formed of cul3, rbx1 and a variable BTB domain-containing protein acting as both, adapter to cullin and substrate recognition subunit. Interacts with btbd6. In terms of processing, neddylated. Attachment of NEDD8 is required for the E3 ubiquitin-protein ligase activity of the SCF-like complex.

The protein resides in the nucleus. The protein operates within protein modification; protein ubiquitination. Probable core component of cullin-based SCF-like E3 ubiquitin-protein ligase complexes which mediate the ubiquitination and subsequent proteasomal degradation of target proteins. The E3 ubiquitin-protein ligase activity of the complex is dependent on the neddylation of the cullin subunit. Involved in ER-Golgi transport by regulating the size of COPII coats, thereby playing a key role in collagen export, which is required for embryonic stem (ES) cells division. May play a role in the regulation of mittotic entry via ubiquitination of aurka. The protein is Cullin-3-B (cul3b) of Xenopus laevis (African clawed frog).